The sequence spans 192 residues: uncharacterized protein (192 aa).

Residues 29 to 160 (HRQAAVLIPI…PLDIYRRGDS (132 aa)) enclose the Nudix hydrolase domain. A Nudix box motif is present at residues 67 to 89 (GAVDDTDASVIAAALREAEEEVA). Mg(2+) contacts are provided by Glu83 and Glu87.

The protein belongs to the Nudix hydrolase family. PCD1 subfamily. Mn(2+) serves as cofactor. Mg(2+) is required as a cofactor.

In terms of biological role, probably mediates the hydrolysis of some nucleoside diphosphate derivatives. This is an uncharacterized protein from Shigella flexneri.